The chain runs to 168 residues: Ubiquitin-fold modifier-conjugating enzyme 1 (168 aa).

Catalysis depends on C119, which acts as the Glycyl thioester intermediate.

This sequence belongs to the ubiquitin-conjugating enzyme family. UFC1 subfamily.

In terms of biological role, E2-like enzyme which forms an intermediate with UFM1 via a thioester linkage. This Drosophila grimshawi (Hawaiian fruit fly) protein is Ubiquitin-fold modifier-conjugating enzyme 1.